We begin with the raw amino-acid sequence, 74 residues long: Kappa-scoloptoxin(07)-Ssm2e (74 aa).

Positions 1 to 19 (MLVFYALLFVSVFSNTVMG) are cleaved as a signal peptide. Positions 20–41 (ATIDMPIPKPILREAIEEIDVN) are excised as a propeptide.

Belongs to the scoloptoxin-07 family. In terms of processing, contains 3 disulfide bonds. Expressed by the venom gland.

It is found in the secreted. In terms of biological role, inhibits voltage-gated potassium channels. In Scolopendra mutilans (Chinese red-headed centipede), this protein is Kappa-scoloptoxin(07)-Ssm2e.